The following is an 819-amino-acid chain: Advillin (819 aa).

The interval 1-731 is core; the sequence is MSLSSAFRAV…YEQLKNELGD (731 aa). Residues 24 to 73 form a Gelsolin-like 1 repeat; it reads MELALVPLSAHGNFYEGDCYIVLSTRRVGSLLSQNIHFWIGKDSSQDEQS. The residue at position 85 (Tyr85) is a Phosphotyrosine. Residues 109 to 116 and 135 to 143 each bind a 1,2-diacyl-sn-glycero-3-phospho-(1D-myo-inositol-4,5-bisphosphate); these read KQGIIYKK and RLLHVKGKR. 5 Gelsolin-like repeats span residues 145-185, 262-306, 403-454, 525-565, and 628-669; these read IQAT…GERL, LSVT…VEKQ, ENLE…DELA, TKAV…DERA, and FLVT…TEKK. Residues 628–819 form a required for interaction with F-actin region; it reads FLVTEVTDFT…LQLKKERGLF (192 aa). The headpiece stretch occupies residues 732-819; it reads ATAIVRITAD…LQLKKERGLF (88 aa). Tyr748 and Tyr758 each carry phosphotyrosine. In terms of domain architecture, HP spans 753 to 819; sequence DGEPKYYPVE…LQLKKERGLF (67 aa).

The protein belongs to the villin/gelsolin family. In terms of assembly, associates (via C-terminus) with actin. Interacts with F-actin. Interacts with SCARF1; the interaction occurs in embryonic dorsal root ganglions at 18 dpc and induces neurite-like outgrowth. Interacts with PLCE1. Interacts with ACTR2 and ACTR3; associates with the ARP2/3 complex. Most highly expressed in the endometrium of the uterus, the intestinal villi and the testes. Weaker expression also detected in the brain, dorsal root ganglions and on the surface of the tongue.

It localises to the cytoplasm. It is found in the cytoskeleton. The protein localises to the cell projection. Its subcellular location is the lamellipodium. The protein resides in the cell junction. It localises to the focal adhesion. It is found in the neuron projection. The protein localises to the axon. Ca(2+)-regulated actin-binding protein which plays an important role in actin bundling. May have a unique function in the morphogenesis of neuronal cells which form ganglia. Required for SREC1-mediated regulation of neurite-like outgrowth. Plays a role in regenerative sensory axon outgrowth and remodeling processes after peripheral injury in neonates. Involved in the formation of long fine actin-containing filopodia-like structures in fibroblast. Plays a role in ciliogenesis. In podocytes, controls lamellipodia formation through the regulation of EGF-induced diacylglycerol generation by PLCE1 and ARP2/3 complex assembly. This chain is Advillin, found in Mus musculus (Mouse).